The chain runs to 453 residues: Bifunctional protein GlmU (453 aa).

The interval 1–228 (MPHWAAVIMA…VHEALGINSR (228 aa)) is pyrophosphorylase. UDP-N-acetyl-alpha-D-glucosamine contacts are provided by residues Lys23, Gln73, 78–79 (GT), 100–102 (SGD), Gly139, Glu153, Asn168, and Asn226. Asp102 is a Mg(2+) binding site. Residue Asn226 coordinates Mg(2+). Positions 229-249 (AQLAAAEDVARQRILSYWMEE) are linker. The segment at 250–453 (GVTIIDPRST…IENWVRNKKK (204 aa)) is N-acetyltransferase. The UDP-N-acetyl-alpha-D-glucosamine site is built by Arg331 and Lys349. The Proton acceptor role is filled by His361. UDP-N-acetyl-alpha-D-glucosamine contacts are provided by Tyr364 and Asn375. Acetyl-CoA is bound by residues Ala378, 384-385 (NY), Ser403, Ala421, and Arg438.

It in the N-terminal section; belongs to the N-acetylglucosamine-1-phosphate uridyltransferase family. The protein in the C-terminal section; belongs to the transferase hexapeptide repeat family. As to quaternary structure, homotrimer. Mg(2+) is required as a cofactor.

Its subcellular location is the cytoplasm. It catalyses the reaction alpha-D-glucosamine 1-phosphate + acetyl-CoA = N-acetyl-alpha-D-glucosamine 1-phosphate + CoA + H(+). The catalysed reaction is N-acetyl-alpha-D-glucosamine 1-phosphate + UTP + H(+) = UDP-N-acetyl-alpha-D-glucosamine + diphosphate. It participates in nucleotide-sugar biosynthesis; UDP-N-acetyl-alpha-D-glucosamine biosynthesis; N-acetyl-alpha-D-glucosamine 1-phosphate from alpha-D-glucosamine 6-phosphate (route II): step 2/2. The protein operates within nucleotide-sugar biosynthesis; UDP-N-acetyl-alpha-D-glucosamine biosynthesis; UDP-N-acetyl-alpha-D-glucosamine from N-acetyl-alpha-D-glucosamine 1-phosphate: step 1/1. It functions in the pathway bacterial outer membrane biogenesis; LPS lipid A biosynthesis. Catalyzes the last two sequential reactions in the de novo biosynthetic pathway for UDP-N-acetylglucosamine (UDP-GlcNAc). The C-terminal domain catalyzes the transfer of acetyl group from acetyl coenzyme A to glucosamine-1-phosphate (GlcN-1-P) to produce N-acetylglucosamine-1-phosphate (GlcNAc-1-P), which is converted into UDP-GlcNAc by the transfer of uridine 5-monophosphate (from uridine 5-triphosphate), a reaction catalyzed by the N-terminal domain. The protein is Bifunctional protein GlmU of Desulfitobacterium hafniense (strain DSM 10664 / DCB-2).